Consider the following 463-residue polypeptide: FAD-dependent monooxygenase str9 (463 aa).

Residues Glu37, Gly50, and Arg114 each coordinate FAD. Arg200 is an active-site residue. Asp334 lines the FAD pocket.

This sequence belongs to the paxM FAD-dependent monooxygenase family.

It participates in mycotoxin biosynthesis. Its function is as follows. FAD-dependent monooxygenase; part of the gene cluster that mediates the biosynthesis of strobilurin A, an antifungal polyketide that contains a key beta-methoxyacrylate toxophore that targets the complex III of the mitochondrial electron transport chain. Strobilurin biosynthesis begins with construction of benzoyl CoA by step-wise elimination of ammonia from phenylalanine by the phenylalanine ammonia-lyase str11, oxygenation by str8 and retro-Claisen reaction to form benzoic acid, which is activated to its CoA thiolester benzoyl CoA by the dedicated CoA ligase str10. Benzoyl CoA forms the starter unit for the highly reducing polyketide synthase stpks1 that produces the polyketide prestrobilutin A. The FAD-dependent oxygenase str9 then catalyzes the key oxidative rearrangement responsible for the creation of the beta-methoxyacrylate toxophore. Str9 performs epoxidation of the 2,3 olefin of prestrobilutin A, followed by Meinwald rearrangement to furnish the aldehyde intermediate. Rapid enolization of the aldehyde intermediate would give the beta-methoxyacrylate skeleton and methylations catalyzed by str2 and str3 complete the synthesis and lead to the production of strobilurin A. The short-chain dehydrogenase stl2 and the dehydrogenase str4 play a role in the shunt pathway leading to the production of bolineol. The cluster encodes no obvious halogenase gene that could be involved in production of strobilurin B, nor any obvious dimethylallyl-transferase that could be involved in the production of strobilurin G. It is possible that unknown proteins encoded in, or near, the cluster (such as str1 or stl1) may form new classes of halogenases or dimethylally-transferases, or that the responsible genes are located elsewhere on the genome. Similarly, proteins encoded by str5/str6 hydrolases appear to have no chemical role in the biosynthesis of strobilurin A. Finally, no obvious self-resistance gene is found within the cluster. The polypeptide is FAD-dependent monooxygenase str9 (Strobilurus tenacellus).